The chain runs to 263 residues: 4-hydroxy-2-oxo-heptane-1,7-dioate aldolase (263 aa).

Histidine 45 (proton acceptor) is an active-site residue. Glutamine 147 contacts substrate. Glutamate 149 provides a ligand contact to a divalent metal cation. Positions 174 and 175 each coordinate substrate. Aspartate 175 is a binding site for a divalent metal cation.

This sequence belongs to the HpcH/HpaI aldolase family. In terms of assembly, homohexamer; trimer of dimers. A divalent metal cation serves as cofactor.

It catalyses the reaction 4-hydroxy-2-oxoheptanedioate = succinate semialdehyde + pyruvate. Its pathway is aromatic compound metabolism; 4-hydroxyphenylacetate degradation; pyruvate and succinate semialdehyde from 4-hydroxyphenylacetate: step 7/7. Functionally, catalyzes the reversible retro-aldol cleavage of 4-hydroxy-2-ketoheptane-1,7-dioate (HKHD) to pyruvate and succinic semialdehyde. The protein is 4-hydroxy-2-oxo-heptane-1,7-dioate aldolase of Salmonella heidelberg (strain SL476).